The following is a 72-amino-acid chain: Putative snRNP Sm-like protein (72 aa).

Residues 4–72 (RPLDILNNAL…RGDNVVYVSP (69 aa)) form the Sm domain.

This sequence belongs to the snRNP Sm proteins family.

The polypeptide is Putative snRNP Sm-like protein (Methanosarcina barkeri (strain Fusaro / DSM 804)).